The chain runs to 156 residues: ATP synthase subunit b (156 aa).

The chain crosses the membrane as a helical span at residues 11-31; it reads AIAFVLFVLFCMKYVWPPIMA.

It belongs to the ATPase B chain family. F-type ATPases have 2 components, F(1) - the catalytic core - and F(0) - the membrane proton channel. F(1) has five subunits: alpha(3), beta(3), gamma(1), delta(1), epsilon(1). F(0) has three main subunits: a(1), b(2) and c(10-14). The alpha and beta chains form an alternating ring which encloses part of the gamma chain. F(1) is attached to F(0) by a central stalk formed by the gamma and epsilon chains, while a peripheral stalk is formed by the delta and b chains.

It localises to the cell inner membrane. In terms of biological role, f(1)F(0) ATP synthase produces ATP from ADP in the presence of a proton or sodium gradient. F-type ATPases consist of two structural domains, F(1) containing the extramembraneous catalytic core and F(0) containing the membrane proton channel, linked together by a central stalk and a peripheral stalk. During catalysis, ATP synthesis in the catalytic domain of F(1) is coupled via a rotary mechanism of the central stalk subunits to proton translocation. Functionally, component of the F(0) channel, it forms part of the peripheral stalk, linking F(1) to F(0). The polypeptide is ATP synthase subunit b (Proteus mirabilis (strain HI4320)).